The primary structure comprises 171 residues: Adenine phosphoribosyltransferase (171 aa).

This sequence belongs to the purine/pyrimidine phosphoribosyltransferase family. As to quaternary structure, homodimer.

Its subcellular location is the cytoplasm. The catalysed reaction is AMP + diphosphate = 5-phospho-alpha-D-ribose 1-diphosphate + adenine. It functions in the pathway purine metabolism; AMP biosynthesis via salvage pathway; AMP from adenine: step 1/1. Catalyzes a salvage reaction resulting in the formation of AMP, that is energically less costly than de novo synthesis. The chain is Adenine phosphoribosyltransferase from Trichlorobacter lovleyi (strain ATCC BAA-1151 / DSM 17278 / SZ) (Geobacter lovleyi).